Here is a 168-residue protein sequence, read N- to C-terminus: Protein-export protein SecB (168 aa).

This sequence belongs to the SecB family. Homotetramer, a dimer of dimers. One homotetramer interacts with 1 SecA dimer.

It is found in the cytoplasm. Its function is as follows. One of the proteins required for the normal export of preproteins out of the cell cytoplasm. It is a molecular chaperone that binds to a subset of precursor proteins, maintaining them in a translocation-competent state. It also specifically binds to its receptor SecA. This is Protein-export protein SecB from Haemophilus influenzae (strain PittGG).